Consider the following 179-residue polypeptide: Pyridoxal 5'-phosphate synthase subunit PdxT (179 aa).

48 to 50 (GES) contacts L-glutamine. Catalysis depends on C79, which acts as the Nucleophile. L-glutamine-binding positions include R101 and 127-128 (IR). Residues H163 and E165 each act as charge relay system in the active site.

Belongs to the glutaminase PdxT/SNO family. In the presence of PdxS, forms a dodecamer of heterodimers. Only shows activity in the heterodimer.

It carries out the reaction aldehydo-D-ribose 5-phosphate + D-glyceraldehyde 3-phosphate + L-glutamine = pyridoxal 5'-phosphate + L-glutamate + phosphate + 3 H2O + H(+). It catalyses the reaction L-glutamine + H2O = L-glutamate + NH4(+). It functions in the pathway cofactor biosynthesis; pyridoxal 5'-phosphate biosynthesis. Catalyzes the hydrolysis of glutamine to glutamate and ammonia as part of the biosynthesis of pyridoxal 5'-phosphate. The resulting ammonia molecule is channeled to the active site of PdxS. This chain is Pyridoxal 5'-phosphate synthase subunit PdxT, found in Francisella tularensis subsp. holarctica (strain FTNF002-00 / FTA).